A 241-amino-acid chain; its full sequence is Corrinoid adenosyltransferase MMAB (241 aa).

A mitochondrion-targeting transit peptide spans M1–F26. The segment at Q27–R69 is disordered. ATP contacts are provided by residues T54 to S63 and K72. S128 carries the post-translational modification Phosphoserine. Residue R184 to R188 participates in ATP binding. Residue K205 is modified to N6-succinyllysine. N208 provides a ligand contact to ATP. K224 bears the N6-acetyllysine; alternate mark. K224 bears the N6-succinyllysine; alternate mark.

Belongs to the Cob(I)alamin adenosyltransferase family. As to quaternary structure, homotrimer.

It is found in the mitochondrion. The enzyme catalyses cob(I)alamin-[corrinoid adenosyltransferase] + ATP = apo-[corrinoid adenosyltransferase] + adenosylcob(III)alamin + triphosphate. Converts cob(I)alamin to adenosylcobalamin (adenosylcob(III)alamin), a coenzyme for methylmalonyl-CoA mutase, therefore participates in the final step of the vitamin B12 conversion. Generates adenosylcobalamin (AdoCbl) and directly delivers the cofactor to MUT in a transfer that is stimulated by ATP-binding to MMAB and gated by MMAA. The sequence is that of Corrinoid adenosyltransferase MMAB from Bos taurus (Bovine).